A 317-amino-acid polypeptide reads, in one-letter code: Aspartate carbamoyltransferase catalytic subunit (317 aa).

The carbamoyl phosphate site is built by R64 and T65. K92 contacts L-aspartate. Carbamoyl phosphate is bound by residues R114, H144, and Q147. Residues R177 and R232 each contribute to the L-aspartate site. Positions 273 and 274 each coordinate carbamoyl phosphate.

Belongs to the aspartate/ornithine carbamoyltransferase superfamily. ATCase family. As to quaternary structure, heterododecamer (2C3:3R2) of six catalytic PyrB chains organized as two trimers (C3), and six regulatory PyrI chains organized as three dimers (R2).

The enzyme catalyses carbamoyl phosphate + L-aspartate = N-carbamoyl-L-aspartate + phosphate + H(+). It functions in the pathway pyrimidine metabolism; UMP biosynthesis via de novo pathway; (S)-dihydroorotate from bicarbonate: step 2/3. Functionally, catalyzes the condensation of carbamoyl phosphate and aspartate to form carbamoyl aspartate and inorganic phosphate, the committed step in the de novo pyrimidine nucleotide biosynthesis pathway. This chain is Aspartate carbamoyltransferase catalytic subunit, found in Thiobacillus denitrificans (strain ATCC 25259 / T1).